We begin with the raw amino-acid sequence, 171 residues long: MFRAIAIIRAHEVIDAVPASHIVLERDERHLRRKAITLENGEKILADFAEPVVLEHGDRLVLDDGREIEIRAASEELYEIRGRDPRHIAELAWHIGNRHLAAQIETDHIFILRDHVIRVMLEGLGATVTDVVAIFSPLRGAYSGGHQHHHGHDHDHGHHGHDHDHHHPDHE.

The interval S143 to E171 is disordered. Basic and acidic residues predominate over residues H152 to E171.

Belongs to the UreE family.

The protein localises to the cytoplasm. Its function is as follows. Involved in urease metallocenter assembly. Binds nickel. Probably functions as a nickel donor during metallocenter assembly. This chain is Urease accessory protein UreE, found in Brucella abortus biovar 1 (strain 9-941).